Here is a 172-residue protein sequence, read N- to C-terminus: Protein-export protein SecB (172 aa).

The protein belongs to the SecB family. As to quaternary structure, homotetramer, a dimer of dimers. One homotetramer interacts with 1 SecA dimer.

It is found in the cytoplasm. One of the proteins required for the normal export of preproteins out of the cell cytoplasm. It is a molecular chaperone that binds to a subset of precursor proteins, maintaining them in a translocation-competent state. It also specifically binds to its receptor SecA. The polypeptide is Protein-export protein SecB (Cupriavidus pinatubonensis (strain JMP 134 / LMG 1197) (Cupriavidus necator (strain JMP 134))).